The following is a 208-amino-acid chain: Casparian strip membrane protein 2 (208 aa).

Positions 1–23 are disordered; it reads MDSKSGRSESAINIPESNSTKHK. At 1-46 the chain is on the cytoplasmic side; the sequence is MDSKSGRSESAINIPESNSTKHKSTVVHTATKVAAVAPRGGGWRRG. A compositionally biased stretch (polar residues) spans 8-18; sequence SESAINIPESN. A helical membrane pass occupies residues 47-67; that stretch reads VSIFDFILRICALAAALAATA. The Extracellular segment spans residues 68-96; that stretch reads TMGTTDQTLPFFTQFFQFQASYDDLPAFT. The helical transmembrane segment at 97 to 117 threads the bilayer; sequence FFVVANGIASGYLVLSLPFSI. Residues 118–129 are Cytoplasmic-facing; it reads ATIVRPHAAAIK. A helical membrane pass occupies residues 130–150; it reads LLLIIFDTVMVAFTAAAAAAA. Over 151–184 the chain is Extracellular; the sequence is AAIVYLAHNGNSKTNWFAICQQFNDFCQRVSGAV. The chain crosses the membrane as a helical span at residues 185-205; that stretch reads VASFVAAVILIFLVVLSAVAI. Residues 206 to 208 lie on the Cytoplasmic side of the membrane; that stretch reads RKH.

It belongs to the Casparian strip membrane proteins (CASP) family. Homodimer and heterodimers.

The protein resides in the cell membrane. Its function is as follows. Regulates membrane-cell wall junctions and localized cell wall deposition. Required for establishment of the Casparian strip membrane domain (CSD) and the subsequent formation of Casparian strips, a cell wall modification of the root endodermis that determines an apoplastic barrier between the intraorganismal apoplasm and the extraorganismal apoplasm and prevents lateral diffusion. The sequence is that of Casparian strip membrane protein 2 from Triphysaria pusilla (Dwarf owl's-clover).